The primary structure comprises 72 residues: ATP synthase subunit c (72 aa).

The next 2 membrane-spanning stretches (helical) occupy residues 1 to 21 (MSLGVIAAAIAIGLSALGAGI) and 49 to 69 (FIGVALVEALPIIGVVIAFIV).

It belongs to the ATPase C chain family. F-type ATPases have 2 components, F(1) - the catalytic core - and F(0) - the membrane proton channel. F(1) has five subunits: alpha(3), beta(3), gamma(1), delta(1), epsilon(1). F(0) has three main subunits: a(1), b(2) and c(10-14). The alpha and beta chains form an alternating ring which encloses part of the gamma chain. F(1) is attached to F(0) by a central stalk formed by the gamma and epsilon chains, while a peripheral stalk is formed by the delta and b chains.

It localises to the cell membrane. In terms of biological role, f(1)F(0) ATP synthase produces ATP from ADP in the presence of a proton or sodium gradient. F-type ATPases consist of two structural domains, F(1) containing the extramembraneous catalytic core and F(0) containing the membrane proton channel, linked together by a central stalk and a peripheral stalk. During catalysis, ATP synthesis in the catalytic domain of F(1) is coupled via a rotary mechanism of the central stalk subunits to proton translocation. Its function is as follows. Key component of the F(0) channel; it plays a direct role in translocation across the membrane. A homomeric c-ring of between 10-14 subunits forms the central stalk rotor element with the F(1) delta and epsilon subunits. The chain is ATP synthase subunit c from Bacillus cytotoxicus (strain DSM 22905 / CIP 110041 / 391-98 / NVH 391-98).